The following is a 320-amino-acid chain: E3 ubiquitin-protein ligase RZF1 (320 aa).

Residue Ser2 is modified to N-acetylserine. The RING-type; atypical zinc-finger motif lies at 186–227 (CPVCKDEFELKSEAKQMPCHHIYHSDCIVPWLVQHNSCPVCR). A disordered region spans residues 229 to 320 (ELPSRGSSSS…MGYSGWPFDY (92 aa)). 2 stretches are compositionally biased toward low complexity: residues 232–249 (SRGSSSSTQSSQNRSTNG) and 295–308 (QQQQQHQHQHQQQQ).

Expressed in seedlings and in flowers.

It carries out the reaction S-ubiquitinyl-[E2 ubiquitin-conjugating enzyme]-L-cysteine + [acceptor protein]-L-lysine = [E2 ubiquitin-conjugating enzyme]-L-cysteine + N(6)-ubiquitinyl-[acceptor protein]-L-lysine.. Its function is as follows. E3 ubiquitin-protein ligase that promotes osmotic stress and abscisic acid (ABA) responses. Negatively regulates drought-mediated control of early seedling development, probably by influencing proline content, water loss, membrane ion leakage and the expression of dehydration stress-related genes (e.g. RAB18, RD29A, RD29B, AOX1A, ERD15, ERD1, COR15A, P5CS1 and P5CR). Modulates bZIP11 accumulation during rehydration following drought. The polypeptide is E3 ubiquitin-protein ligase RZF1 (Arabidopsis thaliana (Mouse-ear cress)).